We begin with the raw amino-acid sequence, 285 residues long: Phosphatidylserine decarboxylase proenzyme (285 aa).

Active-site charge relay system; for autoendoproteolytic cleavage activity residues include aspartate 89, histidine 146, and serine 252. Serine 252 (schiff-base intermediate with substrate; via pyruvic acid; for decarboxylase activity) is an active-site residue. Serine 252 carries the pyruvic acid (Ser); by autocatalysis modification.

The protein belongs to the phosphatidylserine decarboxylase family. PSD-B subfamily. Prokaryotic type I sub-subfamily. In terms of assembly, heterodimer of a large membrane-associated beta subunit and a small pyruvoyl-containing alpha subunit. Requires pyruvate as cofactor. Post-translationally, is synthesized initially as an inactive proenzyme. Formation of the active enzyme involves a self-maturation process in which the active site pyruvoyl group is generated from an internal serine residue via an autocatalytic post-translational modification. Two non-identical subunits are generated from the proenzyme in this reaction, and the pyruvate is formed at the N-terminus of the alpha chain, which is derived from the carboxyl end of the proenzyme. The autoendoproteolytic cleavage occurs by a canonical serine protease mechanism, in which the side chain hydroxyl group of the serine supplies its oxygen atom to form the C-terminus of the beta chain, while the remainder of the serine residue undergoes an oxidative deamination to produce ammonia and the pyruvoyl prosthetic group on the alpha chain. During this reaction, the Ser that is part of the protease active site of the proenzyme becomes the pyruvoyl prosthetic group, which constitutes an essential element of the active site of the mature decarboxylase.

Its subcellular location is the cell membrane. The enzyme catalyses a 1,2-diacyl-sn-glycero-3-phospho-L-serine + H(+) = a 1,2-diacyl-sn-glycero-3-phosphoethanolamine + CO2. Its pathway is phospholipid metabolism; phosphatidylethanolamine biosynthesis; phosphatidylethanolamine from CDP-diacylglycerol: step 2/2. Its function is as follows. Catalyzes the formation of phosphatidylethanolamine (PtdEtn) from phosphatidylserine (PtdSer). This chain is Phosphatidylserine decarboxylase proenzyme, found in Vibrio parahaemolyticus serotype O3:K6 (strain RIMD 2210633).